The chain runs to 494 residues: Probable cytosol aminopeptidase (494 aa).

Positions 260 and 265 each coordinate Mn(2+). K272 is a catalytic residue. 3 residues coordinate Mn(2+): D283, D342, and E344. R346 is an active-site residue.

Belongs to the peptidase M17 family. It depends on Mn(2+) as a cofactor.

It is found in the cytoplasm. It catalyses the reaction Release of an N-terminal amino acid, Xaa-|-Yaa-, in which Xaa is preferably Leu, but may be other amino acids including Pro although not Arg or Lys, and Yaa may be Pro. Amino acid amides and methyl esters are also readily hydrolyzed, but rates on arylamides are exceedingly low.. The enzyme catalyses Release of an N-terminal amino acid, preferentially leucine, but not glutamic or aspartic acids.. Presumably involved in the processing and regular turnover of intracellular proteins. Catalyzes the removal of unsubstituted N-terminal amino acids from various peptides. This chain is Probable cytosol aminopeptidase, found in Bacillus cereus (strain B4264).